A 69-amino-acid chain; its full sequence is Small, acid-soluble spore protein C4 (69 aa).

Belongs to the alpha/beta-type SASP family.

In terms of biological role, SASP are bound to spore DNA. They are double-stranded DNA-binding proteins that cause DNA to change to an a-like conformation. They protect the DNA backbone from chemical and enzymatic cleavage and are thus involved in dormant spore's high resistance to UV light. This Priestia megaterium (Bacillus megaterium) protein is Small, acid-soluble spore protein C4 (SASP-C4).